Here is a 515-residue protein sequence, read N- to C-terminus: Tabersonine 6,7-epoxidase isoform 2 (515 aa).

The chain crosses the membrane as a helical span at residues 1-21; that stretch reads MEFVVSPFAFLIFFFILLKMI. N-linked (GlcNAc...) asparagine glycosylation is found at Asn-173, Asn-259, and Asn-352. Position 449 (Cys-449) interacts with heme.

It belongs to the cytochrome P450 family. It depends on heme as a cofactor. In terms of tissue distribution, mainly expressed in aerial organs, including stems, leaves and flowers.

The protein localises to the endoplasmic reticulum membrane. It carries out the reaction (-)-tabersonine + reduced [NADPH--hemoprotein reductase] + O2 = lochnericine + oxidized [NADPH--hemoprotein reductase] + H2O + H(+). The protein operates within alkaloid biosynthesis. Its function is as follows. Component of the monoterpenoid indole alkaloids (MIAs, e.g. echitovenine, tabersonine, lochnericine, 19-hydroxytabersonine and horhammericine) biosynthetic pathway; MIAs are used in cancer treatment and other medical applications. Cytochrome P450 catalyzing the conversion of tabersonine to lochnericine. This Catharanthus roseus (Madagascar periwinkle) protein is Tabersonine 6,7-epoxidase isoform 2.